The sequence spans 163 residues: Ankyrin repeat domain-containing protein 37 (163 aa).

3 ANK repeats span residues 29-58, 62-91, and 95-124; these read LGQS…DVNQ, FGEA…RIDM, and DGHT…TQDT. A Nuclear localization signal motif is present at residues 129-149; it reads QSSLHNLKETAAGVKRGQCCQ.

It localises to the nucleus. Its subcellular location is the cytoplasm. The chain is Ankyrin repeat domain-containing protein 37 (ankrd37) from Xenopus tropicalis (Western clawed frog).